The sequence spans 483 residues: Aspartyl/glutamyl-tRNA(Asn/Gln) amidotransferase subunit B (483 aa).

The protein belongs to the GatB/GatE family. GatB subfamily. In terms of assembly, heterotrimer of A, B and C subunits.

It catalyses the reaction L-glutamyl-tRNA(Gln) + L-glutamine + ATP + H2O = L-glutaminyl-tRNA(Gln) + L-glutamate + ADP + phosphate + H(+). It carries out the reaction L-aspartyl-tRNA(Asn) + L-glutamine + ATP + H2O = L-asparaginyl-tRNA(Asn) + L-glutamate + ADP + phosphate + 2 H(+). Its function is as follows. Allows the formation of correctly charged Asn-tRNA(Asn) or Gln-tRNA(Gln) through the transamidation of misacylated Asp-tRNA(Asn) or Glu-tRNA(Gln) in organisms which lack either or both of asparaginyl-tRNA or glutaminyl-tRNA synthetases. The reaction takes place in the presence of glutamine and ATP through an activated phospho-Asp-tRNA(Asn) or phospho-Glu-tRNA(Gln). This is Aspartyl/glutamyl-tRNA(Asn/Gln) amidotransferase subunit B from Rickettsia conorii (strain ATCC VR-613 / Malish 7).